An 827-amino-acid polypeptide reads, in one-letter code: Probable beta-glucosidase H (827 aa).

The active site involves aspartate 223. One can recognise a PA14 domain in the interval 387 to 546 (RLLTNAVMHF…DSAEMVRSAV (160 aa)). Residues asparagine 471, asparagine 594, asparagine 600, and asparagine 625 are each glycosylated (N-linked (GlcNAc...) asparagine).

It belongs to the glycosyl hydrolase 3 family.

The protein localises to the secreted. The catalysed reaction is Hydrolysis of terminal, non-reducing beta-D-glucosyl residues with release of beta-D-glucose.. Its pathway is glycan metabolism; cellulose degradation. Functionally, beta-glucosidases are one of a number of cellulolytic enzymes involved in the degradation of cellulosic biomass. Catalyzes the last step releasing glucose from the inhibitory cellobiose. The protein is Probable beta-glucosidase H (bglH) of Aspergillus flavus (strain ATCC 200026 / FGSC A1120 / IAM 13836 / NRRL 3357 / JCM 12722 / SRRC 167).